A 468-amino-acid chain; its full sequence is Monogalactosyldiacylglycerol synthase 2, chloroplastic (468 aa).

UDP contacts are provided by residues His82, Arg251, 361–365, and Glu383; that span reads GTIAE.

It belongs to the glycosyltransferase 28 family. In terms of tissue distribution, expressed mainly in floral buds. Detected in roots, leaves, stems, siliques and pollen tubes.

It is found in the plastid. Its subcellular location is the chloroplast outer membrane. The enzyme catalyses a 1,2-diacyl-sn-glycerol + UDP-alpha-D-galactose = a 1,2-diacyl-3-O-(beta-D-galactosyl)-sn-glycerol + UDP + H(+). It carries out the reaction 1,2-di-(9Z,12Z-octadecadienoyl)-sn-glycerol + UDP-alpha-D-galactose = 1,2-di-(9Z,12Z-octadecadienoyl)-3-beta-D-galactosyl-sn-glycerol + UDP + H(+). The catalysed reaction is 1-(9Z-octadecenoyl)-2-hexadecanoyl-sn-glycerol + UDP-alpha-D-galactose = 1-(9Z-octadecenoyl)-2-hexadecanoyl-3-beta-D-galactosyl-sn-glycerol + UDP + H(+). It catalyses the reaction 1,2-di-(9Z-octadecenoyl)-sn-glycerol + UDP-alpha-D-galactose = 1,2-di-(9Z-octadecenoyl)-3-beta-D-galactosyl-sn-glycerol + UDP + H(+). With respect to regulation, inhibited by galvestine-1. Involved in the synthesis of monogalactosyldiacylglycerol, the major structural component of photosynthetic membranes and in the chloroplast envelope biogenesis. Can use both prokaryotic (18:1/16:0) or eukaryotic (18:2/18:2) 1,2-diacylglycerol species, but operates with some preference for the eukaryotic one. Plays a minor role in galactolipid synthesis in chloroplasts. Is required for membrane lipid remodeling in phosphate-starved roots. Acts as the minor factor involved in digalactosyldiacylglycerol (DGDG) biosynthesis in phosphate-starved roots. Does not seem to be required for plant growth under nutrient-sufficient conditions. Required for membrane lipid remodeling in plants grown in acidic conditions. The sequence is that of Monogalactosyldiacylglycerol synthase 2, chloroplastic from Arabidopsis thaliana (Mouse-ear cress).